Consider the following 323-residue polypeptide: Phosphatidylethanolamine:ceramide ethanolaminephosphotransferase (323 aa).

The Cytoplasmic segment spans residues 1–26; it reads MAVPPVEMYSGSFWNRMRKPLPLRTQ. A helical transmembrane segment spans residues 27–47; sequence VIRFTVVFVIVSFILAVALQI. Residues 48-73 lie on the Extracellular side of the membrane; sequence THERMPDPKVTKPLPDLGFEVLHKYP. Residues 74–94 traverse the membrane as a helical segment; it reads FLFSVADCCIGFLNILSVFTA. Residues 95–147 are Cytoplasmic-facing; it reads FKLYLLHRHCVGSGEPELPCNIPGVSRFFLSVWLCKENCRIELRNVHTIAWIR. Residues 148–168 form a helical membrane-spanning segment; sequence FITSYALLLLSRSVIMVVTSL. Over 169-211 the chain is Extracellular; that stretch reads PNPDDLCQDPPKIENRVKDVILTVLTAGAGSIHCGDLMYSGHT. The active site involves H210. A helical transmembrane segment spans residues 212–232; sequence VILTLHLMFHWIYGAMVHWSF. Position 233 (R233) is a topological domain, cytoplasmic. Residues 234–254 form a helical membrane-spanning segment; sequence PVVTVVAIFGYYCIVASRFHY. Catalysis depends on residues H253 and D257. Residues 255-257 lie on the Extracellular side of the membrane; sequence TDD. A helical transmembrane segment spans residues 258 to 278; sequence VLVAIYLTIATFIAVGHNADG. Residues 279-323 lie on the Cytoplasmic side of the membrane; it reads APWQLQLFIRWLPCCGANSREVTEDGVPVAIVIKNEEMMNFEGKS.

It belongs to the sphingomyelin synthase family.

It localises to the membrane. Bidirectional lipid ethanolaminephosphotransferase capable of converting phosphatidylethanolamine (PE) and ceramide to ethanolamine-phosphorylceramide (EPC) and diacylglycerol (DAG) and vice versa. Direction is dependent on the relative concentrations of DAG and ceramide as phosphoethanolamine acceptors. Does not function strictly as a SM synthase. Essential for viability of the pathogenic bloodstream stage of this human protozoan parasite and, consequently, can be considered as potential drug target. The protein is Phosphatidylethanolamine:ceramide ethanolaminephosphotransferase of Trypanosoma brucei brucei (strain 927/4 GUTat10.1).